The chain runs to 207 residues: Vexin (207 aa).

Residues 55–102 (LELLPHRGDRRDPGDGRRFGRLQTARPPTAHPAKASARPVGISEPKTS) are disordered. Residues 58–72 (LPHRGDRRDPGDGRR) are compositionally biased toward basic and acidic residues.

The protein belongs to the vexin family.

Its subcellular location is the cell membrane. It is found in the nucleus. In terms of biological role, required for neurogenesis in the neural plate and retina. Strongly cooperates with neural bHLH factors to promote neurogenesis. In Pongo abelii (Sumatran orangutan), this protein is Vexin.